The primary structure comprises 206 residues: Ribosomal RNA large subunit methyltransferase E (206 aa).

Residues Gly61, Trp63, Asp81, Asp97, and Asp122 each contribute to the S-adenosyl-L-methionine site. The active-site Proton acceptor is the Lys162.

It belongs to the class I-like SAM-binding methyltransferase superfamily. RNA methyltransferase RlmE family.

The protein localises to the cytoplasm. The catalysed reaction is uridine(2552) in 23S rRNA + S-adenosyl-L-methionine = 2'-O-methyluridine(2552) in 23S rRNA + S-adenosyl-L-homocysteine + H(+). In terms of biological role, specifically methylates the uridine in position 2552 of 23S rRNA at the 2'-O position of the ribose in the fully assembled 50S ribosomal subunit. This chain is Ribosomal RNA large subunit methyltransferase E, found in Neisseria meningitidis serogroup C / serotype 2a (strain ATCC 700532 / DSM 15464 / FAM18).